Reading from the N-terminus, the 250-residue chain is Transmembrane protein 106C (250 aa).

The interval Met-1–Leu-25 is disordered. Residue Gly-2 is the site of N-myristoyl glycine attachment. Over residues Arg-16 to Leu-25 the composition is skewed to basic and acidic residues. Residues Tyr-87–Phe-107 traverse the membrane as a helical segment. Residues Asn-173 and Asn-186 are each glycosylated (N-linked (GlcNAc...) asparagine). A helical membrane pass occupies residues Phe-197–Phe-217.

It belongs to the TMEM106 family. In terms of assembly, interacts with TMEM106B.

Its subcellular location is the endoplasmic reticulum membrane. It is found in the membrane. The chain is Transmembrane protein 106C (TMEM106C) from Homo sapiens (Human).